The sequence spans 424 residues: Probable ribonuclease FAU-1 (424 aa).

Belongs to the FAU-1 family.

Its function is as follows. Probable RNase involved in rRNA stability through maturation and/or degradation of precursor rRNAs. Binds to RNA in loop regions with AU-rich sequences. The sequence is that of Probable ribonuclease FAU-1 from Saccharolobus islandicus (strain L.S.2.15 / Lassen #1) (Sulfolobus islandicus).